A 492-amino-acid chain; its full sequence is MAPRCWRWWPWSSWTRTRLPPSRSIQNFGQHFSTQEQTPQICVVGSGPAGFYTAQHLLKHHSRAHVDIYEKQLVPFGLVRFGVAPDHPEVKNVINTFTQTARSDRCAFYGNVEVGRDVTVQELQDAYHAVVLSYGAEDHQALDIPGEELPGVFSARAFVGWYNGLPENRELAPDLSCDTAVILGQGNVALDVARILLTPPDHLEKTDITEAALGALRQSRVKTVWIVGRRGPLQVAFTIKELREMIQLPGTRPMLDPADFLGLQDRIKEAARPRKRLMELLLRTATEKPGVEEAARRASASRAWGLRFFRSPQQVLPSPDGRRAAGIRLAVTRLEGIGEATRAVPTGDVEDLPCGLVLSSIGYKSRPIDPSVPFDPKLGVVPNMEGRVVDVPGLYCSGWVKRGPTGVITTTMTDSFLTGQILLQDLKAGHLPSGPRPGSAFIKALLDSRGVWPVSFSDWEKLDAEEVSRGQASGKPREKLLDPQEMLRLLGH.

A mitochondrion-targeting transit peptide spans 1–32; that stretch reads MAPRCWRWWPWSSWTRTRLPPSRSIQNFGQHF. FAD contacts are provided by A49, E70, L78, and V114. Residues 185–188, 229–230, and E241 each bind NADP(+); these read QGNV and RR. A phosphoserine mark is found at S311 and S318. FAD-binding positions include W399 and 406-408; that span reads GVI. Residue G406 coordinates NADP(+).

Belongs to the ferredoxin--NADP reductase type 1 family. Monomer. Interacts directly with FDX1. FAD serves as cofactor. In terms of tissue distribution, detected in adrenal cortex and corpus luteum (at protein level).

Its subcellular location is the mitochondrion inner membrane. It catalyses the reaction 2 reduced [adrenodoxin] + NADP(+) + H(+) = 2 oxidized [adrenodoxin] + NADPH. It carries out the reaction 2 reduced [2Fe-2S]-[ferredoxin] + NADP(+) + H(+) = 2 oxidized [2Fe-2S]-[ferredoxin] + NADPH. The protein operates within steroid metabolism; cholesterol metabolism. Serves as the first electron transfer protein in all the mitochondrial P450 systems including cholesterol side chain cleavage in all steroidogenic tissues, steroid 11-beta hydroxylation in the adrenal cortex, 25-OH-vitamin D3-24 hydroxylation in the kidney, and sterol C-27 hydroxylation in the liver. Also acts as a ferredoxin--NADP(+) reductase essential for coenzyme Q biosynthesis: together with FDX2, transfers the electrons required for the hydroxylation reaction performed by COQ6. This is NADPH:adrenodoxin oxidoreductase, mitochondrial (FDXR) from Bos taurus (Bovine).